The following is a 1377-amino-acid chain: DNA-directed RNA polymerase subunit beta' (1377 aa).

C60, C62, C75, and C78 together coordinate Zn(2+). Mg(2+) is bound by residues D449, D451, and D453. Residues C777, C851, C858, and C861 each coordinate Zn(2+).

It belongs to the RNA polymerase beta' chain family. As to quaternary structure, the RNAP catalytic core consists of 2 alpha, 1 beta, 1 beta' and 1 omega subunit. When a sigma factor is associated with the core the holoenzyme is formed, which can initiate transcription. Requires Mg(2+) as cofactor. It depends on Zn(2+) as a cofactor.

It carries out the reaction RNA(n) + a ribonucleoside 5'-triphosphate = RNA(n+1) + diphosphate. Functionally, DNA-dependent RNA polymerase catalyzes the transcription of DNA into RNA using the four ribonucleoside triphosphates as substrates. This chain is DNA-directed RNA polymerase subunit beta', found in Borreliella burgdorferi (strain ZS7) (Borrelia burgdorferi).